The following is a 327-amino-acid chain: Peroxidase 21 (327 aa).

Positions 1 to 28 (MANAKPFCLLGFFCLLLQLFSIFHIGNG) are cleaved as a signal peptide. Disulfide bonds link cysteine 39–cysteine 118, cysteine 72–cysteine 77, cysteine 124–cysteine 323, and cysteine 204–cysteine 231. Histidine 70 functions as the Proton acceptor in the catalytic mechanism. Residues aspartate 71, valine 74, aspartate 78, and serine 80 each contribute to the Ca(2+) site. Position 167 (proline 167) interacts with substrate. Asparagine 170 carries an N-linked (GlcNAc...) asparagine glycan. Histidine 197 is a binding site for heme b. Serine 198 serves as a coordination point for Ca(2+). Positions 247, 250, and 255 each coordinate Ca(2+).

This sequence belongs to the peroxidase family. Classical plant (class III) peroxidase subfamily. It depends on heme b as a cofactor. The cofactor is Ca(2+). Preferentially expressed in roots and leaves, slightly in stems.

It catalyses the reaction 2 a phenolic donor + H2O2 = 2 a phenolic radical donor + 2 H2O. In terms of biological role, removal of H(2)O(2), oxidation of toxic reductants, biosynthesis and degradation of lignin, suberization, auxin catabolism, response to environmental stresses such as wounding, pathogen attack and oxidative stress. These functions might be dependent on each isozyme/isoform in each plant tissue. Might function as heat shock-like defense protein. May be implicated in the systemic acquired resistance response. This is Peroxidase 21 (PER21) from Arabidopsis thaliana (Mouse-ear cress).